Here is a 438-residue protein sequence, read N- to C-terminus: Probable glucose-6-phosphate isomerase (438 aa).

Glutamate 280 acts as the Proton donor in catalysis. Catalysis depends on residues histidine 301 and lysine 410.

It belongs to the GPI family.

The protein localises to the cytoplasm. It catalyses the reaction alpha-D-glucose 6-phosphate = beta-D-fructose 6-phosphate. The protein operates within carbohydrate biosynthesis; gluconeogenesis. It participates in carbohydrate degradation; glycolysis; D-glyceraldehyde 3-phosphate and glycerone phosphate from D-glucose: step 2/4. Catalyzes the reversible isomerization of glucose-6-phosphate to fructose-6-phosphate. In Methanococcus maripaludis (strain DSM 14266 / JCM 13030 / NBRC 101832 / S2 / LL), this protein is Probable glucose-6-phosphate isomerase.